The chain runs to 947 residues: MDVAESPELEPHSPDEEQPALSDDDILRESGSEQDLDGAGERASDLEEEENATRVQSQEEIHSDEEDQASEPKSQDQDSEAHELSRGPAGSPCEEGDDAEEDGTSDLRDEASSVTRELDEHELDYDEEVPEEPAPAAQEEEAEKAGAEEEEEKGEGAPGEEGKPDVQSVGEKEPTEAAKEKKKEDDDGEIDDGEIDDDDLEEGEVKDPSDRKVRPRPTCRFFMKGNCTWGMNCRFIHPGVNDKGNYSLITKAEPFPPNGAPPLGPHPLMPANPWGGPVVDEILPPPPPEPPTESAWERGLRHAKEVLKKATIRKEQEPDFEEKRFTVTIGEDDREFDKENEVFRDWNSRVPRDVRDTTLEPYADPYYDYEIERFWRGGQYENFRVQYTEAEPYHNYRDRERERERENRQRERERDRERDRERERRQRERERERERERDKERQRRKEEWERERAKRDEKDRQHRDRDRDKDRDKDKEKPKPRSPQPPSRQAEPPKKETASVGPQVKRADEWKDPWRRSKSPKKKLGVSVSPSRARRRRKTSASSASASNSSRSSSRSSSYSGSGSSRSRSRSSSYSSYSSRSSRRSSFSGSRSRSRSFSSSPSPSPTPSPHRPPVRTKGEPAPPPGKAGEKSIKKPAPPPAPPQATKTTAPAPEPAKPGDLREARRKERQTRTPPRRRTLSGSGSGSGSSYSGSSSRSRSLSVSSVSSVSSATSSSSSVHSVDSDDMYADLASPVSSASSRSPTPAQTKKERGKSKKEDGVREEKRKRDPSAQPPKSSKAPAGGKASQQAAAPQQAAPGQPQQGSFVAHKEIKLTLLNKAAEKGSRKRYEPSDKDRQSPPAKKANLSPDRGSRDRKSGGRMGSPKPERQRGQNAKAPAAPADRKRPLSPQSKSSSKVTSVPGKATDTATAGTKSGKASTLSRREELLKQLKAVEDAIARKRAKIPGKV.

The residue at position 1 (Met-1) is an N-acetylmethionine. Disordered stretches follow at residues 1–218 (MDVA…PRPT), 275–295 (GGPV…TESA), and 387–921 (YTEA…TLSR). Ser-6, Ser-32, Ser-44, Ser-57, Ser-63, Ser-70, Ser-74, Ser-79, and Ser-91 each carry phosphoserine. The span at 73 to 85 (KSQDQDSEAHELS) shows a compositional bias: basic and acidic residues. Residues 94–104 (EEGDDAEEDGT) show a composition bias toward acidic residues. Thr-104 carries the phosphothreonine modification. Ser-105 and Ser-113 each carry phosphoserine. Residues 105-119 (SDLRDEASSVTRELD) are compositionally biased toward basic and acidic residues. Acidic residues-rich tracts occupy residues 120 to 131 (EHELDYDEEVPE) and 138 to 153 (QEEE…EEEK). Residues 160-185 (EEGKPDVQSVGEKEPTEAAKEKKKED) show a composition bias toward basic and acidic residues. A Phosphoserine modification is found at Ser-168. Residues 186 to 202 (DDGEIDDGEIDDDDLEE) show a composition bias toward acidic residues. Basic and acidic residues predominate over residues 203–212 (GEVKDPSDRK). The segment at 214-240 (RPRPTCRFFMKGNCTWGMNCRFIHPGV) adopts a C3H1-type zinc-finger fold. The segment covering 391-479 (EPYHNYRDRE…DRDKDKEKPK (89 aa)) has biased composition (basic and acidic residues). Phosphoserine is present on Ser-482. A Glycyl lysine isopeptide (Lys-Gly) (interchain with G-Cter in SUMO2) cross-link involves residue Lys-505. The span at 505–515 (KRADEWKDPWR) shows a compositional bias: basic and acidic residues. 3 positions are modified to phosphoserine: Ser-527, Ser-529, and Ser-531. Residues 540-601 (SASSASASNS…SRSRSFSSSP (62 aa)) show a composition bias toward low complexity. Over residues 602 to 611 (SPSPTPSPHR) the composition is skewed to pro residues. Residues Lys-617 and Lys-656 each participate in a glycyl lysine isopeptide (Lys-Gly) (interchain with G-Cter in SUMO2) cross-link. A compositionally biased stretch (basic and acidic residues) spans 656-665 (KPGDLREARR). 2 stretches are compositionally biased toward low complexity: residues 687 to 720 (GSSY…SVHS) and 731 to 745 (ASPV…PTPA). A compositionally biased stretch (basic and acidic residues) spans 755 to 769 (KKEDGVREEKRKRDP). A compositionally biased stretch (low complexity) spans 773–804 (PPKSSKAPAGGKASQQAAAPQQAAPGQPQQGS). At Lys-809 the chain carries N6-acetyllysine. Lys-812 participates in a covalent cross-link: Glycyl lysine isopeptide (Lys-Gly) (interchain with G-Cter in SUMO2). Over residues 819 to 836 (AAEKGSRKRYEPSDKDRQ) the composition is skewed to basic and acidic residues. Ser-837, Ser-846, Ser-862, Ser-887, and Ser-890 each carry phosphoserine. Low complexity predominate over residues 887–918 (SPQSKSSSKVTSVPGKATDTATAGTKSGKAST). A Glycyl lysine isopeptide (Lys-Gly) (interchain with G-Cter in SUMO2) cross-link involves residue Lys-902. Positions 915 to 944 (KASTLSRREELLKQLKAVEDAIARKRAKIP) form a coiled coil.

As to quaternary structure, interacts with ZFC3H1 in a RNase-insensitive manner.

It is found in the nucleus. The sequence is that of Zinc finger CCCH domain-containing protein 18 (Zc3h18) from Rattus norvegicus (Rat).